A 372-amino-acid chain; its full sequence is Chaperone protein DnaJ (372 aa).

Residues Ser5–Gly70 form the J domain. Residues Gly140–Arg218 form a CR-type zinc finger. Zn(2+) contacts are provided by Cys153, Cys156, Cys170, Cys173, Cys192, Cys195, Cys206, and Cys209. 4 CXXCXGXG motif repeats span residues Cys153–Gly160, Cys170–Gly177, Cys192–Gly199, and Cys206–Gly213.

This sequence belongs to the DnaJ family. Homodimer. Zn(2+) is required as a cofactor.

It is found in the cytoplasm. Its function is as follows. Participates actively in the response to hyperosmotic and heat shock by preventing the aggregation of stress-denatured proteins and by disaggregating proteins, also in an autonomous, DnaK-independent fashion. Unfolded proteins bind initially to DnaJ; upon interaction with the DnaJ-bound protein, DnaK hydrolyzes its bound ATP, resulting in the formation of a stable complex. GrpE releases ADP from DnaK; ATP binding to DnaK triggers the release of the substrate protein, thus completing the reaction cycle. Several rounds of ATP-dependent interactions between DnaJ, DnaK and GrpE are required for fully efficient folding. Also involved, together with DnaK and GrpE, in the DNA replication of plasmids through activation of initiation proteins. The sequence is that of Chaperone protein DnaJ from Leptospira interrogans serogroup Icterohaemorrhagiae serovar copenhageni (strain Fiocruz L1-130).